Reading from the N-terminus, the 104-residue chain is L-rhamnose mutarotase (104 aa).

Substrate is bound at residue Tyr18. His22 acts as the Proton donor in catalysis. Substrate-binding positions include Tyr41 and Trp76–Trp77.

It belongs to the rhamnose mutarotase family. In terms of assembly, homodimer.

The protein resides in the cytoplasm. The catalysed reaction is alpha-L-rhamnose = beta-L-rhamnose. The protein operates within carbohydrate metabolism; L-rhamnose metabolism. Involved in the anomeric conversion of L-rhamnose. This Shouchella clausii (strain KSM-K16) (Alkalihalobacillus clausii) protein is L-rhamnose mutarotase.